The chain runs to 280 residues: Phosphonoacetaldehyde hydrolase (280 aa).

Residue aspartate 23 is the Nucleophile of the active site. Residues aspartate 23 and alanine 25 each coordinate Mg(2+). The active-site Schiff-base intermediate with substrate is the lysine 64. A Mg(2+)-binding site is contributed by aspartate 197.

Belongs to the HAD-like hydrolase superfamily. PhnX family. As to quaternary structure, homodimer. Mg(2+) is required as a cofactor.

The enzyme catalyses phosphonoacetaldehyde + H2O = acetaldehyde + phosphate + H(+). In terms of biological role, involved in phosphonate degradation. This chain is Phosphonoacetaldehyde hydrolase, found in Bordetella avium (strain 197N).